Consider the following 204-residue polypeptide: N-(5'-phosphoribosyl)anthranilate isomerase (204 aa).

The protein belongs to the TrpF family.

It carries out the reaction N-(5-phospho-beta-D-ribosyl)anthranilate = 1-(2-carboxyphenylamino)-1-deoxy-D-ribulose 5-phosphate. Its pathway is amino-acid biosynthesis; L-tryptophan biosynthesis; L-tryptophan from chorismate: step 3/5. This is N-(5'-phosphoribosyl)anthranilate isomerase from Bacillus cereus (strain G9842).